Consider the following 406-residue polypeptide: Succinylornithine transaminase (406 aa).

Residue Lys252 is modified to N6-(pyridoxal phosphate)lysine.

Belongs to the class-III pyridoxal-phosphate-dependent aminotransferase family. AstC subfamily. Pyridoxal 5'-phosphate is required as a cofactor.

It carries out the reaction N(2)-succinyl-L-ornithine + 2-oxoglutarate = N-succinyl-L-glutamate 5-semialdehyde + L-glutamate. Its pathway is amino-acid degradation; L-arginine degradation via AST pathway; L-glutamate and succinate from L-arginine: step 3/5. Its function is as follows. Catalyzes the transamination of N(2)-succinylornithine and alpha-ketoglutarate into N(2)-succinylglutamate semialdehyde and glutamate. Can also act as an acetylornithine aminotransferase. The sequence is that of Succinylornithine transaminase from Escherichia coli O127:H6 (strain E2348/69 / EPEC).